Consider the following 161-residue polypeptide: SsrA-binding protein (161 aa).

It belongs to the SmpB family.

The protein resides in the cytoplasm. Required for rescue of stalled ribosomes mediated by trans-translation. Binds to transfer-messenger RNA (tmRNA), required for stable association of tmRNA with ribosomes. tmRNA and SmpB together mimic tRNA shape, replacing the anticodon stem-loop with SmpB. tmRNA is encoded by the ssrA gene; the 2 termini fold to resemble tRNA(Ala) and it encodes a 'tag peptide', a short internal open reading frame. During trans-translation Ala-aminoacylated tmRNA acts like a tRNA, entering the A-site of stalled ribosomes, displacing the stalled mRNA. The ribosome then switches to translate the ORF on the tmRNA; the nascent peptide is terminated with the 'tag peptide' encoded by the tmRNA and targeted for degradation. The ribosome is freed to recommence translation, which seems to be the essential function of trans-translation. The protein is SsrA-binding protein of Haemophilus influenzae (strain 86-028NP).